The primary structure comprises 626 residues: Elongation factor 4 (626 aa).

The tr-type G domain occupies 14–195; the sequence is SVIRNFCIIA…QIVMDVPAPH (182 aa). Residues 26–31 and 142–145 contribute to the GTP site; these read DHGKST and NKID. A disordered region spans residues 603-626; it reads LSTGEDSNDRDTKDKIRAAQKTEG. Basic and acidic residues predominate over residues 609–626; sequence SNDRDTKDKIRAAQKTEG.

The protein belongs to the TRAFAC class translation factor GTPase superfamily. Classic translation factor GTPase family. LepA subfamily.

It localises to the cell membrane. The enzyme catalyses GTP + H2O = GDP + phosphate + H(+). Its function is as follows. Required for accurate and efficient protein synthesis under certain stress conditions. May act as a fidelity factor of the translation reaction, by catalyzing a one-codon backward translocation of tRNAs on improperly translocated ribosomes. Back-translocation proceeds from a post-translocation (POST) complex to a pre-translocation (PRE) complex, thus giving elongation factor G a second chance to translocate the tRNAs correctly. Binds to ribosomes in a GTP-dependent manner. The protein is Elongation factor 4 of Bifidobacterium longum (strain DJO10A).